Reading from the N-terminus, the 401-residue chain is Imidazolonepropionase (401 aa).

The Fe(3+) site is built by H70 and H72. Residues H70 and H72 each coordinate Zn(2+). R79, Y142, and H175 together coordinate 4-imidazolone-5-propanoate. Y142 is an N-formimidoyl-L-glutamate binding site. Fe(3+) is bound at residue H238. H238 is a binding site for Zn(2+). Residue Q241 participates in 4-imidazolone-5-propanoate binding. D313 provides a ligand contact to Fe(3+). D313 is a binding site for Zn(2+). N-formimidoyl-L-glutamate contacts are provided by N315 and G317. 4-imidazolone-5-propanoate is bound at residue T318.

Belongs to the metallo-dependent hydrolases superfamily. HutI family. Requires Zn(2+) as cofactor. Fe(3+) is required as a cofactor.

Its subcellular location is the cytoplasm. The enzyme catalyses 4-imidazolone-5-propanoate + H2O = N-formimidoyl-L-glutamate. The protein operates within amino-acid degradation; L-histidine degradation into L-glutamate; N-formimidoyl-L-glutamate from L-histidine: step 3/3. In terms of biological role, catalyzes the hydrolytic cleavage of the carbon-nitrogen bond in imidazolone-5-propanoate to yield N-formimidoyl-L-glutamate. It is the third step in the universal histidine degradation pathway. The sequence is that of Imidazolonepropionase from Xanthomonas campestris pv. campestris (strain 8004).